A 221-amino-acid chain; its full sequence is NAD(P)H-hydrate epimerase (221 aa).

A YjeF N-terminal domain is found at Met-10–Phe-210. Asn-58–Asp-62 is a binding site for (6S)-NADPHX. The K(+) site is built by Asn-59 and Asp-120. Residues Gly-124 to Val-130 and Asp-153 contribute to the (6S)-NADPHX site. Residue Thr-156 participates in K(+) binding.

This sequence belongs to the NnrE/AIBP family. Requires K(+) as cofactor.

The enzyme catalyses (6R)-NADHX = (6S)-NADHX. The catalysed reaction is (6R)-NADPHX = (6S)-NADPHX. Functionally, catalyzes the epimerization of the S- and R-forms of NAD(P)HX, a damaged form of NAD(P)H that is a result of enzymatic or heat-dependent hydration. This is a prerequisite for the S-specific NAD(P)H-hydrate dehydratase to allow the repair of both epimers of NAD(P)HX. The sequence is that of NAD(P)H-hydrate epimerase from Leuconostoc mesenteroides subsp. mesenteroides (strain ATCC 8293 / DSM 20343 / BCRC 11652 / CCM 1803 / JCM 6124 / NCDO 523 / NBRC 100496 / NCIMB 8023 / NCTC 12954 / NRRL B-1118 / 37Y).